The following is a 114-amino-acid chain: DNA-directed RNA polymerases II, IV and V subunit 9B (114 aa).

Residues Cys7, Cys10, Cys29, Cys32, Cys76, Cys79, Cys103, and Cys108 each contribute to the Zn(2+) site. The TFIIS-type zinc-finger motif lies at 72–113; sequence KAVRCAKCQHGEAVFFQATARGEEGMTLFFVCCNPNCSHRWR.

Belongs to the archaeal RpoM/eukaryotic RPA12/RPB9/RPC11 RNA polymerase family. As to quaternary structure, component of the RNA polymerase II, IV and V complexes. Interacts with NRPD1.

It is found in the nucleus. It localises to the nucleolus. Its function is as follows. DNA-dependent RNA polymerase catalyzes the transcription of DNA into RNA using the four ribonucleoside triphosphates as substrates. Component of RNA polymerase II which synthesizes mRNA precursors and many functional non-coding RNAs. Pol II is the central component of the basal RNA polymerase II transcription machinery. It is composed of mobile elements that move relative to each other. Component of RNA polymerases IV and V which mediate short-interfering RNAs (siRNA) accumulation and subsequent RNA-directed DNA methylation-dependent (RdDM) transcriptional gene silencing (TGS) of endogenous repeated sequences, including transposable elements. Required for RNA silencing. This is DNA-directed RNA polymerases II, IV and V subunit 9B (NRPB9B) from Arabidopsis thaliana (Mouse-ear cress).